Reading from the N-terminus, the 341-residue chain is Cyclic GMP-AMP synthase-like receptor (341 aa).

ATP-binding positions include Ser-64 and 77 to 79 (EFD). Mg(2+) is bound by residues Glu-77, Asp-79, and Asp-172. Position 172 (Asp-172) interacts with GTP. ATP is bound by residues Lys-230 and 246 to 250 (SYHIK). Glu-258 lines the Mn(2+) pocket.

This sequence belongs to the mab-21 family. It depends on Mg(2+) as a cofactor. Mn(2+) is required as a cofactor.

The catalysed reaction is GTP + ATP = 2',3'-cGAMP + 2 diphosphate. It carries out the reaction GTP + ATP = pppGp(2'-5')A + diphosphate. It catalyses the reaction pppGp(2'-5')A = 2',3'-cGAMP + diphosphate. Functionally, nucleotidyltransferase that catalyzes the formation of cyclic GMP-AMP (2',3'-cGAMP) from ATP and GTP and plays a key role in innate immunity. Acts as a key sensor of double-stranded RNA (dsRNA), the presence of dsRNA in the cytoplasm being a danger signal that triggers the immune responses. Directly binds dsRNA, activating the nucleotidyltransferase activity, leading to synthesis of 2',3'-cGAMP, a second messenger that binds to and activates Sting, thereby triggering the immune response via activation of the NF-kappa-B transcription factor. The sequence is that of Cyclic GMP-AMP synthase-like receptor from Hydra vulgaris (Hydra).